A 480-amino-acid polypeptide reads, in one-letter code: Porphobilinogen deaminase, chloroplastic (480 aa).

The transit peptide at 1–139 directs the protein to the chloroplast; the sequence is MYCGRYETIG…VSGGRIWSLA (139 aa). Position 395 is an S-(dipyrrolylmethanemethyl)cysteine (C395).

Belongs to the HMBS family. Dipyrromethane serves as cofactor.

The protein resides in the plastid. It is found in the chloroplast. The catalysed reaction is 4 porphobilinogen + H2O = hydroxymethylbilane + 4 NH4(+). The protein operates within porphyrin-containing compound metabolism; protoporphyrin-IX biosynthesis; coproporphyrinogen-III from 5-aminolevulinate: step 2/4. Its pathway is porphyrin-containing compound metabolism; chlorophyll biosynthesis. Its function is as follows. Tetrapolymerization of the monopyrrole PBG into the hydroxymethylbilane pre-uroporphyrinogen in several discrete steps. This chain is Porphobilinogen deaminase, chloroplastic, found in Euglena gracilis.